The sequence spans 61 residues: Alpha-conotoxine-like Am1.4 (61 aa).

Residues 1–21 form the signal peptide; the sequence is MGMRMMFTVFLLVVLATTVVS. Positions 22–44 are excised as a propeptide; sequence FMSGRASHGRNAAASDLIALTIK.

It belongs to the conotoxin A superfamily. Is not hydroxylated. In terms of processing, contains 2 disulfide bonds. In terms of tissue distribution, expressed by the venom duct.

The protein localises to the secreted. In terms of biological role, alpha-conotoxins act on postsynaptic membranes, they bind to the nicotinic acetylcholine receptors (nAChR) and thus inhibit them. In Conus amadis (Amadis cone), this protein is Alpha-conotoxine-like Am1.4.